Reading from the N-terminus, the 507-residue chain is Maturase K (507 aa).

This sequence belongs to the intron maturase 2 family. MatK subfamily.

The protein resides in the plastid. It is found in the chloroplast. Usually encoded in the trnK tRNA gene intron. Probably assists in splicing its own and other chloroplast group II introns. This Humulus lupulus (European hop) protein is Maturase K.